Reading from the N-terminus, the 115-residue chain is Large ribosomal subunit protein uL18 (115 aa).

This sequence belongs to the universal ribosomal protein uL18 family. In terms of assembly, part of the 50S ribosomal subunit; part of the 5S rRNA/L5/L18/L25 subcomplex. Contacts the 5S and 23S rRNAs.

This is one of the proteins that bind and probably mediate the attachment of the 5S RNA into the large ribosomal subunit, where it forms part of the central protuberance. This Ruthia magnifica subsp. Calyptogena magnifica protein is Large ribosomal subunit protein uL18.